The chain runs to 247 residues: Protein IRON-RELATED TRANSCRIPTION FACTOR 2 (247 aa).

The Nuclear localization signal motif lies at 68-75 (HRKLSHNA). Residues 68–81 (HRKLSHNAYERDRR) are basic motif. The bHLH domain occupies 68–119 (HRKLSHNAYERDRRKQLNELYSSLRALLPDADHTKLSIPTTVSRVLKYIPEL). Positions 82–119 (KQLNELYSSLRALLPDADHTKLSIPTTVSRVLKYIPEL) are helix-loop-helix motif.

The protein belongs to the bHLH protein family. In terms of assembly, forms homodimers. Interacts with BHLH156 in the nucleus. In terms of tissue distribution, expressed constitutively at low levels in the roots. Also observed in flowers, developing seeds, embryos and vascular bundles.

It is found in the nucleus. The protein localises to the cytoplasm. Its function is as follows. Transcription activator that binds to the DNA motif 5'-CACGTGG-3' in the promoter of iron (Fe) deficiency-inducible genes as well as of genes involved in iron homeostasis, thus contributing to basal tolerance to iron deficiency, iron uptake from soil and iron transport, particularly during seed maturation and germination. Promotes the accumulation of mugineic acid family phytosiderophores (MAs). Required for ethylene-mediated signaling during iron deficiency responses. Improves growth and yield, especially in calcareous soil with low iron availability. Promotes iron concentration in shoots and grain. The protein is Protein IRON-RELATED TRANSCRIPTION FACTOR 2 of Oryza sativa subsp. japonica (Rice).